The chain runs to 916 residues: Nonsense-mediated mRNA decay factor SMG8 (916 aa).

Positions 566–626 are disordered; the sequence is LENSNRTPDT…KNYASQGDAD (61 aa). Residues 589–604 show a composition bias toward polar residues; sequence LSGSQKSQDSASNLTF.

This sequence belongs to the SMG8 family.

Involved in nonsense-mediated decay (NMD) of mRNAs containing premature stop codons. Probable component of kinase complex containing SMG1 and recruited to stalled ribosomes. This chain is Nonsense-mediated mRNA decay factor SMG8, found in Aedes aegypti (Yellowfever mosquito).